A 285-amino-acid polypeptide reads, in one-letter code: Probable endonuclease 4 (285 aa).

Residues His69, His109, Glu145, Asp179, His182, His216, Asp229, His231, and Glu261 each contribute to the Zn(2+) site.

This sequence belongs to the AP endonuclease 2 family. Zn(2+) serves as cofactor.

The catalysed reaction is Endonucleolytic cleavage to 5'-phosphooligonucleotide end-products.. Functionally, endonuclease IV plays a role in DNA repair. It cleaves phosphodiester bonds at apurinic or apyrimidinic (AP) sites, generating a 3'-hydroxyl group and a 5'-terminal sugar phosphate. The polypeptide is Probable endonuclease 4 (Salmonella schwarzengrund (strain CVM19633)).